The chain runs to 337 residues: Protein-arginine kinase (337 aa).

The 232-residue stretch at 8–239 folds into the Phosphagen kinase C-terminal domain; it reads VVLSSRIRLA…KQIISSERRA (232 aa). ATP contacts are provided by residues 11–15, His-76, Arg-110, 161–165, and 192–197; these read SSRIR, RASVM, and RGIYGE. The RDXXRA motif of the pArg binding pocket involved in allosteric regulation signature appears at 321–326; sequence RDVKRA.

Belongs to the ATP:guanido phosphotransferase family.

It carries out the reaction L-arginyl-[protein] + ATP = N(omega)-phospho-L-arginyl-[protein] + ADP + H(+). Appears to be allosterically activated by the binding of pArg-containing polypeptides to the pArg-binding pocket localized in the C-terminal domain of McsB. Catalyzes the specific phosphorylation of arginine residues in proteins. This Caldanaerobacter subterraneus subsp. tengcongensis (strain DSM 15242 / JCM 11007 / NBRC 100824 / MB4) (Thermoanaerobacter tengcongensis) protein is Protein-arginine kinase.